Consider the following 577-residue polypeptide: Isocitrate dehydrogenase kinase/phosphatase (577 aa).

ATP contacts are provided by residues 318-324 and lysine 339; that span reads APGVRGM. The active site involves aspartate 374.

The protein belongs to the AceK family.

It is found in the cytoplasm. It carries out the reaction L-seryl-[isocitrate dehydrogenase] + ATP = O-phospho-L-seryl-[isocitrate dehydrogenase] + ADP + H(+). Bifunctional enzyme which can phosphorylate or dephosphorylate isocitrate dehydrogenase (IDH) on a specific serine residue. This is a regulatory mechanism which enables bacteria to bypass the Krebs cycle via the glyoxylate shunt in response to the source of carbon. When bacteria are grown on glucose, IDH is fully active and unphosphorylated, but when grown on acetate or ethanol, the activity of IDH declines drastically concomitant with its phosphorylation. The chain is Isocitrate dehydrogenase kinase/phosphatase from Pseudomonas aeruginosa (strain ATCC 15692 / DSM 22644 / CIP 104116 / JCM 14847 / LMG 12228 / 1C / PRS 101 / PAO1).